The sequence spans 205 residues: Latherin (205 aa).

A disulfide bridge links Cys-133 with Cys-176.

This sequence belongs to the BPI/LBP/Plunc superfamily. Plunc family. As to quaternary structure, monomer.

It localises to the secreted. Major protein in sweat, has surfactant properties. The sequence is that of Latherin (LATH) from Equus quagga burchellii (Burchell's zebra).